The primary structure comprises 423 residues: uncharacterized protein (423 aa).

Positions 1 to 16 are cleaved as a signal peptide; it reads MKSRIFFITLLTIVAA. At 17–402 the chain is on the extracellular side; that stretch reads QESADQLCSS…SSSAKEEQTS (386 aa). 16 disulfide bridges follow: Cys-24-Cys-217, Cys-33-Cys-43, Cys-36-Cys-68, Cys-46-Cys-57, Cys-219-Cys-238, Cys-230-Cys-241, Cys-243-Cys-252, Cys-254-Cys-288, Cys-271-Cys-286, Cys-280-Cys-291, Cys-293-Cys-303, Cys-305-Cys-327, Cys-310-Cys-325, Cys-319-Cys-330, Cys-332-Cys-341, and Cys-343-Cys-350. The N-linked (GlcNAc...) asparagine glycan is linked to Asn-65. Positions 215–350 are cysteine-rich tandem repeats; that stretch reads CGCECEKHPE…CSCSTASNNC (136 aa). 3 consecutive I-EGF domains span residues 219–253, 254–304, and 305–342; these read CEKHPEINSRLCHQNGHLVCGQCVCDQSRGGDKCE, CPLA…KFCQ, and CDNDSCPLAVNGKVCSGNGVCDCGVCKCEMGWERDDCS. A glycan (N-linked (GlcNAc...) asparagine) is linked at Asn-274. The N-linked (GlcNAc...) asparagine glycan is linked to Asn-307. The interval 354–406 is disordered; sequence GTPAPEEKDKPESVPEEPEATEKPDDMPSDSDLEKELDESSSAKEEQTSSSGV. Acidic residues predominate over residues 380–392; sequence MPSDSDLEKELDE. A helical membrane pass occupies residues 403 to 421; it reads SSGVVSRVCVLLTFFLLVL. Residues 422–423 are Cytoplasmic-facing; that stretch reads NF.

This sequence belongs to the integrin beta chain family.

Its subcellular location is the membrane. This is an uncharacterized protein from Caenorhabditis elegans.